Here is a 165-residue protein sequence, read N- to C-terminus: NADH-quinone oxidoreductase subunit I (165 aa).

4Fe-4S ferredoxin-type domains lie at 57-86 (RRYD…IESE) and 96-125 (SRYD…ETHI). Positions 66, 69, 72, 76, 105, 108, 111, and 115 each coordinate [4Fe-4S] cluster.

The protein belongs to the complex I 23 kDa subunit family. In terms of assembly, NDH-1 is composed of 14 different subunits. Subunits NuoA, H, J, K, L, M, N constitute the membrane sector of the complex. [4Fe-4S] cluster is required as a cofactor.

It localises to the cell inner membrane. It catalyses the reaction a quinone + NADH + 5 H(+)(in) = a quinol + NAD(+) + 4 H(+)(out). Its function is as follows. NDH-1 shuttles electrons from NADH, via FMN and iron-sulfur (Fe-S) centers, to quinones in the respiratory chain. The immediate electron acceptor for the enzyme in this species is believed to be ubiquinone. Couples the redox reaction to proton translocation (for every two electrons transferred, four hydrogen ions are translocated across the cytoplasmic membrane), and thus conserves the redox energy in a proton gradient. The sequence is that of NADH-quinone oxidoreductase subunit I from Polaromonas sp. (strain JS666 / ATCC BAA-500).